The following is a 198-amino-acid chain: Large ribosomal subunit protein uL13B (198 aa).

Serine 2 carries the N-acetylserine; partial modification. Serine 43 carries the phosphoserine modification. A Glycyl lysine isopeptide (Lys-Gly) (interchain with G-Cter in ubiquitin) cross-link involves residue lysine 176. Serine 181, serine 185, and serine 187 each carry phosphoserine.

This sequence belongs to the universal ribosomal protein uL13 family. In terms of assembly, component of the large ribosomal subunit (LSU). Mature yeast ribosomes consist of a small (40S) and a large (60S) subunit. The 40S small subunit contains 1 molecule of ribosomal RNA (18S rRNA) and 33 different proteins (encoded by 57 genes). The large 60S subunit contains 3 rRNA molecules (25S, 5.8S and 5S rRNA) and 46 different proteins (encoded by 81 genes). In terms of processing, N-terminally acetylated by acetyltransferase NatA.

The protein resides in the cytoplasm. Functionally, component of the ribosome, a large ribonucleoprotein complex responsible for the synthesis of proteins in the cell. The small ribosomal subunit (SSU) binds messenger RNAs (mRNAs) and translates the encoded message by selecting cognate aminoacyl-transfer RNA (tRNA) molecules. The large subunit (LSU) contains the ribosomal catalytic site termed the peptidyl transferase center (PTC), which catalyzes the formation of peptide bonds, thereby polymerizing the amino acids delivered by tRNAs into a polypeptide chain. The nascent polypeptides leave the ribosome through a tunnel in the LSU and interact with protein factors that function in enzymatic processing, targeting, and the membrane insertion of nascent chains at the exit of the ribosomal tunnel. This Saccharomyces cerevisiae (strain ATCC 204508 / S288c) (Baker's yeast) protein is Large ribosomal subunit protein uL13B.